We begin with the raw amino-acid sequence, 215 residues long: Probable transaldolase (215 aa).

The active-site Schiff-base intermediate with substrate is the Lys-83.

Belongs to the transaldolase family. Type 3B subfamily.

It is found in the cytoplasm. It carries out the reaction D-sedoheptulose 7-phosphate + D-glyceraldehyde 3-phosphate = D-erythrose 4-phosphate + beta-D-fructose 6-phosphate. It participates in carbohydrate degradation; pentose phosphate pathway; D-glyceraldehyde 3-phosphate and beta-D-fructose 6-phosphate from D-ribose 5-phosphate and D-xylulose 5-phosphate (non-oxidative stage): step 2/3. Transaldolase is important for the balance of metabolites in the pentose-phosphate pathway. The chain is Probable transaldolase from Desulforapulum autotrophicum (strain ATCC 43914 / DSM 3382 / VKM B-1955 / HRM2) (Desulfobacterium autotrophicum).